The primary structure comprises 389 residues: Succinyl-diaminopimelate desuccinylase (389 aa).

H72 contacts Zn(2+). D74 is an active-site residue. D105 is a binding site for Zn(2+). Residue E144 is the Proton acceptor of the active site. Zn(2+) contacts are provided by E145, E173, and H362.

The protein belongs to the peptidase M20A family. DapE subfamily. As to quaternary structure, homodimer. Requires Zn(2+) as cofactor. It depends on Co(2+) as a cofactor.

The catalysed reaction is N-succinyl-(2S,6S)-2,6-diaminopimelate + H2O = (2S,6S)-2,6-diaminopimelate + succinate. It participates in amino-acid biosynthesis; L-lysine biosynthesis via DAP pathway; LL-2,6-diaminopimelate from (S)-tetrahydrodipicolinate (succinylase route): step 3/3. Its function is as follows. Catalyzes the hydrolysis of N-succinyl-L,L-diaminopimelic acid (SDAP), forming succinate and LL-2,6-diaminopimelate (DAP), an intermediate involved in the bacterial biosynthesis of lysine and meso-diaminopimelic acid, an essential component of bacterial cell walls. This chain is Succinyl-diaminopimelate desuccinylase, found in Rhodopseudomonas palustris (strain HaA2).